The following is a 128-amino-acid chain: CD59 glycoprotein (128 aa).

The N-terminal stretch at 1-25 (MGIQGGSVLFGLLLVLAVFCHSGNS) is a signal peptide. The UPAR/Ly6 domain occupies 26 to 108 (LQCYSCPYPT…ALKNGGTTLS (83 aa)). Cystine bridges form between Cys28–Cys51, Cys31–Cys38, Cys44–Cys64, Cys70–Cys88, and Cys89–Cys94. N-linked (GlcNAc...) asparagine glycosylation occurs at Asn43. Asn102 carries the GPI-anchor amidated asparagine lipid modification. Positions 103–128 (GGTTLSKKTVLLLVIPFLVAAWSLHP) are cleaved as a propeptide — removed in mature form.

Interacts with T-cell surface antigen CD2. Post-translationally, N- and O-glycosylated.

It localises to the cell membrane. The protein resides in the secreted. In terms of biological role, potent inhibitor of the complement membrane attack complex (MAC) action, which protects self-cells from damage during complement activation. Acts by binding to the beta-haipins of C8 (C8A and C8B) components of the assembling MAC, forming an intermolecular beta-sheet that prevents incorporation of the multiple copies of C9 required for complete formation of the osmolytic pore. This chain is CD59 glycoprotein, found in Aotus trivirgatus (Three-striped night monkey).